A 501-amino-acid polypeptide reads, in one-letter code: Proline--tRNA ligase (501 aa).

Belongs to the class-II aminoacyl-tRNA synthetase family.

It catalyses the reaction tRNA(Pro) + L-proline + ATP = L-prolyl-tRNA(Pro) + AMP + diphosphate. The chain is Proline--tRNA ligase from Encephalitozoon cuniculi (strain GB-M1) (Microsporidian parasite).